The chain runs to 425 residues: Serine/threonine transporter SstT (425 aa).

9 helical membrane passes run Phe-11–Ala-31, Phe-43–Leu-63, Leu-91–Val-111, Ala-141–Leu-161, Ile-182–Ile-202, Leu-216–Val-236, Ile-290–Leu-310, Leu-316–Ala-336, and Val-363–Thr-383.

This sequence belongs to the dicarboxylate/amino acid:cation symporter (DAACS) (TC 2.A.23) family.

It is found in the cell inner membrane. The catalysed reaction is L-serine(in) + Na(+)(in) = L-serine(out) + Na(+)(out). The enzyme catalyses L-threonine(in) + Na(+)(in) = L-threonine(out) + Na(+)(out). Involved in the import of serine and threonine into the cell, with the concomitant import of sodium (symport system). The chain is Serine/threonine transporter SstT from Psychromonas ingrahamii (strain DSM 17664 / CCUG 51855 / 37).